The chain runs to 726 residues: ORC ubiquitin ligase 1 (726 aa).

The RING-type; degenerate zinc finger occupies 18–56 (CHICLGKVRQPVICINNHVFCSICIDLWLKNNSQCPACR). 2 coiled-coil regions span residues 87–129 (LRKT…TILD) and 155–270 (ETVA…MNSI). S210 is modified (phosphoserine). A disordered region spans residues 274-335 (ALPADGKGSK…ARQESTSKAE (62 aa)). Residues 280 to 290 (KGSKGSEEDVA) show a composition bias toward basic and acidic residues. A compositionally biased stretch (low complexity) spans 300–320 (KQPSSSTSSSSHLAKPSSSRL). A compositionally biased stretch (polar residues) spans 321-334 (CDTSSARQESTSKA). S526, S553, S561, S568, S570, S719, and S721 each carry phosphoserine. The interval 687-726 (QSPWSTSFVPEKRNKNVNQSTKRKIQSSLSNASPSKATKS) is disordered. The segment covering 702–726 (NVNQSTKRKIQSSLSNASPSKATKS) has biased composition (polar residues).

Associates with ORC complex. Binds to chromatin; association is cell cycle-regulated, absent from mitotic chromosomes, is associated with chromatin from G1 and partially released from chromatin from mid S-phase. In terms of processing, auto-ubiquitinated.

Its subcellular location is the chromosome. It carries out the reaction S-ubiquitinyl-[E2 ubiquitin-conjugating enzyme]-L-cysteine + [acceptor protein]-L-lysine = [E2 ubiquitin-conjugating enzyme]-L-cysteine + N(6)-ubiquitinyl-[acceptor protein]-L-lysine.. In terms of biological role, E3 ubiquitin ligase essential for DNA replication origin activation during S phase. Acts as a replication origin selector which selects the origins to be fired and catalyzes the multi-mono-ubiquitination of a subset of chromatin-bound ORC3 and ORC5 during S-phase. This chain is ORC ubiquitin ligase 1 (OBI1), found in Pongo abelii (Sumatran orangutan).